The following is a 245-amino-acid chain: 1-(5-phosphoribosyl)-5-[(5-phosphoribosylamino)methylideneamino] imidazole-4-carboxamide isomerase (245 aa).

Aspartate 7 acts as the Proton acceptor in catalysis. Aspartate 129 functions as the Proton donor in the catalytic mechanism.

Belongs to the HisA/HisF family.

It localises to the cytoplasm. The catalysed reaction is 1-(5-phospho-beta-D-ribosyl)-5-[(5-phospho-beta-D-ribosylamino)methylideneamino]imidazole-4-carboxamide = 5-[(5-phospho-1-deoxy-D-ribulos-1-ylimino)methylamino]-1-(5-phospho-beta-D-ribosyl)imidazole-4-carboxamide. The protein operates within amino-acid biosynthesis; L-histidine biosynthesis; L-histidine from 5-phospho-alpha-D-ribose 1-diphosphate: step 4/9. The sequence is that of 1-(5-phosphoribosyl)-5-[(5-phosphoribosylamino)methylideneamino] imidazole-4-carboxamide isomerase from Enterobacter sp. (strain 638).